The primary structure comprises 1430 residues: Target of rapamycin complex 2 subunit TSC11 (1430 aa).

Residues 1 to 62 (MSIPHSAKQS…TITNESSKRN (62 aa)) form a disordered region. 2 stretches are compositionally biased toward polar residues: residues 7 to 26 (AKQSSPLSSRRRSVTNTTPL) and 35 to 44 (NSSTQISSAK). Ser19 bears the Phosphoserine mark. The segment covering 45–57 (NITSSSPSTITNE) has biased composition (low complexity). Phosphoserine occurs at positions 81, 84, 87, and 141. Positions 91 to 180 (ARRTRSTMTK…EKHIFDLKQQ (90 aa)) form a coiled coil. A disordered region spans residues 182-285 (DKKRQRSLTT…NLTGDTEKDL (104 aa)). The span at 233–265 (TTPTSGTERNSQQNLNRNSTVNSRNNENHSTLS) shows a compositional bias: polar residues. One can recognise an N-terminal Ras-GEF domain in the interval 995-1100 (SVVAVADQAL…FQQKSRLPLH (106 aa)).

The protein belongs to the RICTOR family. The target of rapamycin complex 2 (TORC2) is composed of at least AVO1, AVO2, BIT61, LST8, TOR2 and TSC11. TORC2 forms a homodimer. Contrary to TORC1, TORC2 does not bind to and is not sensitive to FKBP-rapamycin. TSC11 binds to the N-terminal HEAT repeat region in TOR2 and is required for TORC2 integrity by tethering AVO1 and AVO2 to the complex. In terms of processing, phosphorylated by TOR2; when part of TORC2.

It is found in the cell membrane. It localises to the vacuole membrane. Its function is as follows. Essential component of TORC2, which regulates cell cycle-dependent polarization of the actin-cytoskeleton and cell wall integrity. TORC2 controls polarity of the actin cytoskeleton, which is required for orienting the secretory pathway toward discrete growth sites, via the RHO1/PKC1/MAPK cell integrity pathway. TSC11 may exert its functions through two distinct mechanisms, one mediated by AVO1 and the other mediated by AVO2 and SLM1. The sequence is that of Target of rapamycin complex 2 subunit TSC11 (TSC11) from Saccharomyces cerevisiae (strain ATCC 204508 / S288c) (Baker's yeast).